Reading from the N-terminus, the 174-residue chain is ATP-dependent protease subunit HslV (174 aa).

Threonine 2 is an active-site residue. Residues glycine 157, cysteine 160, and threonine 163 each contribute to the Na(+) site.

This sequence belongs to the peptidase T1B family. HslV subfamily. As to quaternary structure, a double ring-shaped homohexamer of HslV is capped on each side by a ring-shaped HslU homohexamer. The assembly of the HslU/HslV complex is dependent on binding of ATP.

Its subcellular location is the cytoplasm. It carries out the reaction ATP-dependent cleavage of peptide bonds with broad specificity.. Allosterically activated by HslU binding. Functionally, protease subunit of a proteasome-like degradation complex believed to be a general protein degrading machinery. This is ATP-dependent protease subunit HslV from Shewanella piezotolerans (strain WP3 / JCM 13877).